A 753-amino-acid polypeptide reads, in one-letter code: Polyribonucleotide nucleotidyltransferase (753 aa).

Mg(2+)-binding residues include D543 and D549. Residues 609 to 668 form the KH domain; sequence PRITTVKIPVAKIGELIGPKGKNINALTEETGANISIEDDGTVFISAADGASAEAAIEKI. The 70-residue stretch at 680–749 folds into the S1 motif domain; the sequence is GERFLGTVVK…NRGKISLVPV (70 aa).

The protein belongs to the polyribonucleotide nucleotidyltransferase family. Requires Mg(2+) as cofactor.

The protein localises to the cytoplasm. It carries out the reaction RNA(n+1) + phosphate = RNA(n) + a ribonucleoside 5'-diphosphate. Functionally, involved in mRNA degradation. Catalyzes the phosphorolysis of single-stranded polyribonucleotides processively in the 3'- to 5'-direction. This Corynebacterium glutamicum (strain ATCC 13032 / DSM 20300 / JCM 1318 / BCRC 11384 / CCUG 27702 / LMG 3730 / NBRC 12168 / NCIMB 10025 / NRRL B-2784 / 534) protein is Polyribonucleotide nucleotidyltransferase.